Here is a 151-residue protein sequence, read N- to C-terminus: Histone H2A.2.1 (151 aa).

Met-1 carries the post-translational modification N-acetylmethionine. 2 disordered regions span residues 1-22 (MDGSKAKKVAAKKFGGPRKKSV) and 129-151 (EKAEKAGAAPKSPKKTTKSPKKA). 2 short sequence motifs (SPKK motif) span residues 140 to 143 (SPKK) and 147 to 150 (SPKK). Residues 140–151 (SPKKTTKSPKKA) are compositionally biased toward basic residues.

The protein belongs to the histone H2A family. The nucleosome is a histone octamer containing two molecules each of H2A, H2B, H3 and H4 assembled in one H3-H4 heterotetramer and two H2A-H2B heterodimers. The octamer wraps approximately 147 bp of DNA. Phosphorylated within its C-terminal part, probably at the SPKK motifs.

The protein resides in the nucleus. It localises to the chromosome. Core component of nucleosome. Nucleosomes wrap and compact DNA into chromatin, limiting DNA accessibility to the cellular machineries which require DNA as a template. Histones thereby play a central role in transcription regulation, DNA repair, DNA replication and chromosomal stability. DNA accessibility is regulated via a complex set of post-translational modifications of histones, also called histone code, and nucleosome remodeling. The sequence is that of Histone H2A.2.1 from Triticum aestivum (Wheat).